A 487-amino-acid polypeptide reads, in one-letter code: (S)-N-methylcoclaurine 3'-hydroxylase isozyme 1 (487 aa).

Residues 4-24 (TVALIAVIISSILYLLFGGSG) form a helical membrane-spanning segment. Cys429 contributes to the heme binding site.

This sequence belongs to the cytochrome P450 family. It depends on heme as a cofactor.

Its subcellular location is the endoplasmic reticulum membrane. It is found in the microsome membrane. The enzyme catalyses (S)-N-methylcoclaurine + reduced [NADPH--hemoprotein reductase] + O2 = (S)-3'-hydroxy-N-methylcoclaurine + oxidized [NADPH--hemoprotein reductase] + H2O + H(+). It functions in the pathway alkaloid biosynthesis; (S)-reticuline biosynthesis; (S)-reticuline from (S)-norcoclaurine: step 3/4. Its function is as follows. 3'-hydroxylation of (S)-N-methylcoclaurine. The chain is (S)-N-methylcoclaurine 3'-hydroxylase isozyme 1 (CYP80B1) from Eschscholzia californica (California poppy).